The following is a 572-amino-acid chain: Hemagglutinin-neuraminidase (572 aa).

At 1–31 the chain is on the intravirion side; the sequence is MEYWKHTNHGKDAGNELETSMATHGNKLTNK. The chain crosses the membrane as a helical span at residues 32–52; the sequence is IIYILWTIILVLLSIVFIIVL. Over 53–572 the chain is Virion surface; it reads INSIKSEKAH…FKTEIPKSCS (520 aa). Cystine bridges form between cysteine 190–cysteine 214 and cysteine 256–cysteine 269. Residues 252–257 are involved in neuraminidase activity; the sequence is NRKSCS. Residues asparagine 308 and asparagine 351 are each glycosylated (N-linked (GlcNAc...) asparagine; by host). 2 disulfides stabilise this stretch: cysteine 355–cysteine 469 and cysteine 463–cysteine 473. An N-linked (GlcNAc...) asparagine; by host glycan is attached at asparagine 523. A disulfide bridge connects residues cysteine 535 and cysteine 544.

This sequence belongs to the paramyxoviruses hemagglutinin-neuraminidase family. As to quaternary structure, homotetramer; composed of disulfide-linked homodimers. Interacts with F protein trimer.

It localises to the virion membrane. The protein resides in the host cell membrane. It catalyses the reaction Hydrolysis of alpha-(2-&gt;3)-, alpha-(2-&gt;6)-, alpha-(2-&gt;8)- glycosidic linkages of terminal sialic acid residues in oligosaccharides, glycoproteins, glycolipids, colominic acid and synthetic substrates.. Its function is as follows. Attaches the virus to sialic acid-containing cell receptors and thereby initiating infection. Binding of HN protein to the receptor induces a conformational change that allows the F protein to trigger virion/cell membranes fusion. Neuraminidase activity ensures the efficient spread of the virus by dissociating the mature virions from the neuraminic acid containing glycoproteins. In Homo sapiens (Human), this protein is Hemagglutinin-neuraminidase (HN).